The primary structure comprises 517 residues: MLSEDLATSFLPPSYMWSLTLFALCLSAILMFPFLTGRRLSITHRKQGWRISLVNTRGDFQNEAEQLIRMGFSKSPSAFRMSTDGGPRLILSQKHLDAMSDDDHFNVAEAVKRDYLLDLFGFETAFHGTLHSEIVAPAVTAMTKKLVPLVPLMSKEAALGLEKEWTDNSEYHDVPLQPTLGGVVARLASLAFVGPDLCRNPTWLEITVSYTINRVIAVYVLRIFPSFLQPFVHWVLPPCRKLRAQIQQARELILPALKHERQLQSAGNAKRDPNRPFSSLAWNDEYAAGRLYDPTVAQLRMIFVSIHTTIDMAVKVLVRLCEHPELIQPLREEIVTVCGENGLTHSSLERLLLMDSLMKETQRLEPASLATIARYTHRKTTLSDGTIVPKGTQVVLPNMFMWNNESIYPDSNTFDAYRFLRMRDDPETAKLASFTRSSHIHTAFGHGKHTCPGRFFASDTIKIILCHILLKYDLQLCDGEAPAKKRYGFAMYRDPDARIRVRRRGVEGVSEGILAGF.

The chain crosses the membrane as a helical span at residues 15-35 (YMWSLTLFALCLSAILMFPFL). N-linked (GlcNAc...) asparagine glycosylation occurs at asparagine 404. A heme-binding site is contributed by cysteine 451.

Belongs to the cytochrome P450 family. Heme serves as cofactor.

It localises to the membrane. The enzyme catalyses 3-hydroxypentacecilide A + NADPH + O2 + H(+) = chrodrimanin F + NADP(+) + H2O. It catalyses the reaction chrodrimanin C + NADPH + O2 + H(+) = chrodrimanin H + NADP(+) + H2O. It carries out the reaction verruculide A + NADPH + O2 + H(+) = chrodrimanin E + NADP(+) + H2O. The catalysed reaction is chrodrimanin T + NADPH + O2 + H(+) = chrodrimanin A + NADP(+) + H2O. Its pathway is secondary metabolite biosynthesis; terpenoid biosynthesis. Cytochrome P450 monooxygenase; part of the gene cluster that mediates the biosynthesis of chrodrimanin B, a meroterpenoid that acts as a potent blocker of insect GABA-gated chloride channels. The first step of the pathway is the biosynthesis of 6-hydroxymellein by the polyketide synthase cdmE. The prenyltransferase cdmH acts as a 6-hydroxymellein 5-farnesyltransferase and produces the hydrophobic metabolite verruculide C. The FAD-dependent monooxygenase cdmI further converts verruculide C into verruculide B. The terpene cyclase cdmG then produced the pentacyclic molecule 3-hydroxypentacecilide A, the backbone structure of chrodrimanin B, via folding the farnesyl moiety of the substrate into the chair-boat conformation. The short-chain dehydrogenase/reductase cdmF functions as the 3-OH dehydrogenase that oxidizes the C-3 hydroxyl group of 3-hydroxypentacecilide A and produces chrodrimanin C, the dehydrogenated product of 3-hydroxypentacecilide A. The cytochrome P450 monooxygenase cdmJ then accepts both 3-hydroxypentacecilide A and chrodrimanin C and functions as a C-7-beta-hydroxylase to produce respectively chrodrimanin H and chrodrimanin F. The dioxygenase cdmA accepts chrodrimanin H to afford chrodrimanin E, which is further transformed to chrodrimanin A by the dioxygenase cdmD. CdmA can also accept chrodrimanin C as substrate to convert it into verruculide A, which is further converted into chrodrimanin T by cdmD. The last step of the biosynthesis is proposed to be performed by the acetyltransferase cdmC which acetylates chrodrimanin A to yield chrodrimanin B. The pathway may also lead to the production of additional shunt products, including chrodrimanins T and U. The polypeptide is Cytochrome P450 monooxygenase cdmJ (Talaromyces verruculosus (Penicillium verruculosum)).